A 402-amino-acid chain; its full sequence is Succinyl-CoA--D-citramalate CoA-transferase (402 aa).

Residue aspartate 174 is the Nucleophile of the active site.

Belongs to the CoA-transferase III family. In terms of assembly, homodimer.

The catalysed reaction is (3R)-citramalate + succinyl-CoA = (3R)-citramalyl-CoA + succinate. It carries out the reaction (R)-malate + succinyl-CoA = (R)-malyl-CoA + succinate. Functionally, involved in the 3-hydroxypropionate cycle used for autotrophic carbon dioxide fixation, and in the glyoxylate assimilation cycle used to regenerate acetyl-CoA and produce pyruvate as universal precursor for biosynthesis. Catalyzes the transfer of CoA moiety from succinyl-CoA to D-citramalate to yield citramalyl-CoA. This chain is Succinyl-CoA--D-citramalate CoA-transferase, found in Chloroflexus aurantiacus (strain ATCC 29366 / DSM 635 / J-10-fl).